The primary structure comprises 462 residues: NAD-capped RNA hydrolase NUDT12 (462 aa).

ANK repeat units follow at residues 11–40 (EIVT…SLLN), 45–74 (NGWT…DRSI), and 78–98 (SRQT…ANLL). Lys185 carries the N6-succinyllysine modification. The Zn(2+) site is built by Cys284 and Cys287. Residue Lys292 is modified to N6-succinyllysine. The Zn(2+) site is built by Cys302 and Cys307. Substrate contacts are provided by residues Tyr318, 354 to 356 (AGF), Glu370, Glu374, and Glu415. Residues 319 to 453 (PRVDPVVIMQ…SRAIAHQLIK (135 aa)) form the Nudix hydrolase domain. Positions 354, 370, 374, and 415 each coordinate Mg(2+). The short motif at 355-376 (GFIEPGETIEDAVRREVEEESG) is the Nudix box element. The Microbody targeting signal motif lies at 460 to 462 (PNL).

The protein belongs to the Nudix hydrolase family. NudC subfamily. In terms of assembly, homodimer. Homodimerization is essential for its catalytic activity and protein stability. Interacts (via ANK repeats) with BLMH. Requires Mg(2+) as cofactor. Zn(2+) is required as a cofactor.

It is found in the cytoplasm. The protein resides in the peroxisome. It localises to the cytoplasmic granule. The enzyme catalyses a 5'-end NAD(+)-phospho-ribonucleoside in mRNA + H2O = a 5'-end phospho-adenosine-phospho-ribonucleoside in mRNA + beta-nicotinamide D-ribonucleotide + 2 H(+). It catalyses the reaction NAD(+) + H2O = beta-nicotinamide D-ribonucleotide + AMP + 2 H(+). It carries out the reaction NADH + H2O = reduced beta-nicotinamide D-ribonucleotide + AMP + 2 H(+). The catalysed reaction is NADPH + H2O = reduced beta-nicotinamide D-ribonucleotide + adenosine 2',5'-bisphosphate + 2 H(+). Its function is as follows. mRNA decapping enzyme that specifically removes the nicotinamide adenine dinucleotide (NAD) cap from a subset of mRNAs by hydrolyzing the diphosphate linkage to produce nicotinamide mononucleotide (NMN) and 5' monophosphate mRNA. The NAD-cap is present at the 5'-end of some RNAs; in contrast to the canonical N7 methylguanosine (m7G) cap, the NAD cap promotes mRNA decay. Preferentially acts on NAD-capped transcripts in response to nutrient stress. Also acts on free nicotinamide adenine dinucleotide molecules: hydrolyzes NAD(H) into NMN(H) and AMP, and NADPH into NMNH and 2',5'-ADP. May act to regulate the concentration of peroxisomal nicotinamide nucleotide cofactors required for oxidative metabolism in this organelle. Regulates the levels of circadian clock components PER1, PER2, PER3 and CRY2 in the liver. The protein is NAD-capped RNA hydrolase NUDT12 of Macaca fascicularis (Crab-eating macaque).